Consider the following 532-residue polypeptide: Chaperonin GroEL 2 (532 aa).

ATP is bound by residues 30–33 (TLGP), Lys51, 87–91 (DGTTT), Gly415, 479–481 (NAA), and Asp495.

It belongs to the chaperonin (HSP60) family. In terms of assembly, forms a cylinder of 14 subunits composed of two heptameric rings stacked back-to-back. Interacts with the co-chaperonin GroES.

It localises to the cytoplasm. It catalyses the reaction ATP + H2O + a folded polypeptide = ADP + phosphate + an unfolded polypeptide.. In terms of biological role, together with its co-chaperonin GroES, plays an essential role in assisting protein folding. The GroEL-GroES system forms a nano-cage that allows encapsulation of the non-native substrate proteins and provides a physical environment optimized to promote and accelerate protein folding. The chain is Chaperonin GroEL 2 from Vibrio parahaemolyticus serotype O3:K6 (strain RIMD 2210633).